Consider the following 323-residue polypeptide: Sphingolipid delta(4)-desaturase/C4-monooxygenase DES2 (323 aa).

A lipid anchor (N-myristoyl glycine) is attached at Gly2. 2 helical membrane-spanning segments follow: residues 45 to 65 (WTVT…QGLA) and 68 to 88 (WLFF…TLAI). The Histidine box-1 signature appears at 89-93 (HDISH). Positions 95–99 (TAFGT) are required for C4-hydroxylase activity. The Histidine box-2 signature appears at 128–132 (HVDHH). The helical transmembrane segment at 209 to 231 (MVYLLASSLLGLGLHPISGHFVA) threads the bilayer. A Histidine box-3 motif is present at residues 259–263 (HMEHH).

It belongs to the fatty acid desaturase type 1 family. DEGS subfamily.

The protein resides in the endoplasmic reticulum membrane. The enzyme catalyses a dihydroceramide + 2 Fe(II)-[cytochrome b5] + O2 + 2 H(+) = a phytoceramide + 2 Fe(III)-[cytochrome b5] + H2O. It catalyses the reaction an N-acylsphinganine + 2 Fe(II)-[cytochrome b5] + O2 + 2 H(+) = an N-acylsphing-4-enine + 2 Fe(III)-[cytochrome b5] + 2 H2O. The catalysed reaction is N-octanoylsphinganine + 2 Fe(II)-[cytochrome b5] + O2 + 2 H(+) = N-octanoyl-4-hydroxysphinganine + 2 Fe(III)-[cytochrome b5] + H2O. It carries out the reaction an N-acylsphinganine + 2 Fe(II)-[cytochrome b5] + O2 + 2 H(+) = an N-acyl-(4R)-4-hydroxysphinganine + 2 Fe(III)-[cytochrome b5] + H2O. Its pathway is membrane lipid metabolism; sphingolipid biosynthesis. Functionally, bifunctional enzyme which acts both as a sphingolipid delta(4)-desaturase and a sphingolipid C4-monooxygenase. This is Sphingolipid delta(4)-desaturase/C4-monooxygenase DES2 from Bos taurus (Bovine).